The chain runs to 21 residues: Cutinase 2 (21 aa).

Belongs to the cutinase family.

The protein resides in the secreted. The enzyme catalyses cutin + H2O = cutin monomers.. With respect to regulation, inhibited by diisopropyl fluorophosphate (DFP). In terms of biological role, catalyzes the hydrolysis of complex carboxylic polyesters found in the cell wall of plants. Degrades cutin, a macromolecule that forms the structure of the plant cuticle. Allows pathogenic fungi to penetrate through the cuticular barrier into the host plant during the initial stage of fungal infection. The sequence is that of Cutinase 2 from Colletotrichum gloeosporioides (Anthracnose fungus).